The chain runs to 685 residues: DEAD-box ATP-dependent RNA helicase 7 (685 aa).

Residues Met-1–Lys-89 are disordered. Composition is skewed to basic and acidic residues over residues Met-22–Lys-42 and Ala-66–Asn-78. A Q motif motif is present at residues Asn-107–Ala-135. One can recognise a Helicase ATP-binding domain in the interval Phe-138 to Thr-320. Ala-151–Thr-158 is an ATP binding site. The short motif at Asp-266 to Asp-269 is the DEAD box element. In terms of domain architecture, Helicase C-terminal spans Asp-349–Ala-491.

Belongs to the DEAD box helicase family. DDX21/DDX50 subfamily.

It is found in the nucleus. It carries out the reaction ATP + H2O = ADP + phosphate + H(+). The polypeptide is DEAD-box ATP-dependent RNA helicase 7 (RH7) (Spinacia oleracea (Spinach)).